We begin with the raw amino-acid sequence, 935 residues long: UvrABC system protein A (935 aa).

Position 31 to 38 (31 to 38 (GLSGSGKS)) interacts with ATP. The C4-type zinc finger occupies 254–281 (CFKCKMSFEELEPLSFSFNSPKGACESC). ABC transporter domains are found at residues 310-579 (IFGY…NNHS) and 599-931 (KEKH…KFLA). 631 to 638 (GVSGSGKS) contributes to the ATP binding site. The C4-type zinc-finger motif lies at 731–757 (CEKCQGDGDIKIEMHFLPDVLVQCDSC).

This sequence belongs to the ABC transporter superfamily. UvrA family. In terms of assembly, forms a heterotetramer with UvrB during the search for lesions.

It is found in the cytoplasm. Its function is as follows. The UvrABC repair system catalyzes the recognition and processing of DNA lesions. UvrA is an ATPase and a DNA-binding protein. A damage recognition complex composed of 2 UvrA and 2 UvrB subunits scans DNA for abnormalities. When the presence of a lesion has been verified by UvrB, the UvrA molecules dissociate. The polypeptide is UvrABC system protein A (Helicobacter pylori (strain ATCC 700392 / 26695) (Campylobacter pylori)).